The following is a 158-amino-acid chain: Nucleoside diphosphate kinase (158 aa).

Residues lysine 16, phenylalanine 64, arginine 92, threonine 98, arginine 109, and asparagine 119 each contribute to the ATP site. The active-site Pros-phosphohistidine intermediate is the histidine 122.

The protein belongs to the NDK family. Requires Mg(2+) as cofactor.

It localises to the cytoplasm. It catalyses the reaction a 2'-deoxyribonucleoside 5'-diphosphate + ATP = a 2'-deoxyribonucleoside 5'-triphosphate + ADP. It carries out the reaction a ribonucleoside 5'-diphosphate + ATP = a ribonucleoside 5'-triphosphate + ADP. Functionally, major role in the synthesis of nucleoside triphosphates other than ATP. The ATP gamma phosphate is transferred to the NDP beta phosphate via a ping-pong mechanism, using a phosphorylated active-site intermediate. The chain is Nucleoside diphosphate kinase from Haloquadratum walsbyi (strain DSM 16790 / HBSQ001).